Reading from the N-terminus, the 312-residue chain is NAD(P)(+)--arginine ADP-ribosyltransferase 1 (312 aa).

The N-terminal stretch at 1–20 (MELLALRWVLLAGTLLSTSA) is a signal peptide. The propeptide occupies 21–31 (ASSALQEGDLG). Disulfide bonds link cysteine 51-cysteine 260 and cysteine 159-cysteine 208. In terms of domain architecture, TR mART core spans 71–256 (IAYAVTWRQA…IQLHSKGKMS (186 aa)). 3 residues coordinate NAD(+): tyrosine 108, arginine 164, and glutamine 183. Residue arginine 164 is part of the active site. Serine 186 is a catalytic residue. Serine 217 contributes to the NAD(+) binding site. Glutamate 224 is a catalytic residue. A propeptide spanning residues 267 to 312 (GGQWGRGHQEVGLGLSPGLSLPVLPCRRRVWEGLGHREGDPIPAAV) is cleaved from the precursor.

This sequence belongs to the Arg-specific ADP-ribosyltransferase family.

The protein localises to the secreted. It localises to the extracellular space. It catalyses the reaction L-arginyl-[protein] + NAD(+) = N(omega)-(ADP-D-ribosyl)-L-arginyl-[protein] + nicotinamide + H(+). The polypeptide is NAD(P)(+)--arginine ADP-ribosyltransferase 1 (Gallus gallus (Chicken)).